Reading from the N-terminus, the 396-residue chain is MAKAKFERTKPHVNIGTIGHVDHGKTTLTAAITKVLADKYPDLNQSFAFDQIDKAPEEKARGITINISHVEYQTEKRHYAHVDAPGHADYIKNMITGAAQMDGAILVVAATDGPMPQTREHVLLARQVGVPYILVALNKADMVDDEEILELVEMEVRELLAAQEFDEEAPVVRVSGLKALEGDPKWVKSVEDLMDAVDESIPDPVRETDKPFLMPIEDVFTITGRGTVVTGRVERGIINVNEEVEITGIRPETTKTTVTGIEMFRKLLDQGQAGDNVGLLIRGIKREDVERGQVVIKPGTTTPHTEFEGQAYILSKDEGGRHTPFFNNYRPQFYFRTTDVTGVVTLPEGTEMVMPGDNTEMSVKLIQPVAMEEGLRFAIREGGRTVGAGRVTKIIK.

The tr-type G domain maps to 10–205 (KPHVNIGTIG…AVDESIPDPV (196 aa)). Residues 19–26 (GHVDHGKT) form a G1 region. 19-26 (GHVDHGKT) provides a ligand contact to GTP. Thr-26 serves as a coordination point for Mg(2+). The interval 62–66 (GITIN) is G2. A G3 region spans residues 83 to 86 (DAPG). GTP is bound by residues 83–87 (DAPGH) and 138–141 (NKAD). The G4 stretch occupies residues 138 to 141 (NKAD). A G5 region spans residues 175–177 (SGL).

Belongs to the TRAFAC class translation factor GTPase superfamily. Classic translation factor GTPase family. EF-Tu/EF-1A subfamily. Monomer.

The protein localises to the cytoplasm. It catalyses the reaction GTP + H2O = GDP + phosphate + H(+). Functionally, GTP hydrolase that promotes the GTP-dependent binding of aminoacyl-tRNA to the A-site of ribosomes during protein biosynthesis. The chain is Elongation factor Tu from Nocardia farcinica (strain IFM 10152).